A 290-amino-acid chain; its full sequence is Signal peptidase I (290 aa).

Residues 1–13 lie on the Cytoplasmic side of the membrane; that stretch reads MKFLRSVYAFCSS. Residues 14 to 34 form a helical membrane-spanning segment; the sequence is WVGTIIIVLLVIFFIAQAFII. Over 35–290 the chain is Extracellular; that stretch reads PSRSMVGTLY…KIIKKEKATH (256 aa). Active-site residues include Ser38 and Lys106.

It belongs to the peptidase S26 family.

It is found in the cell membrane. The enzyme catalyses Cleavage of hydrophobic, N-terminal signal or leader sequences from secreted and periplasmic proteins.. The protein is Signal peptidase I (lepB) of Helicobacter pylori (strain J99 / ATCC 700824) (Campylobacter pylori J99).